Consider the following 411-residue polypeptide: Actin-like protein 9 (411 aa).

Residues 1–15 are compositionally biased toward basic and acidic residues; sequence MDVNGPKRWEPHRSL. A disordered region spans residues 1–23; sequence MDVNGPKRWEPHRSLDLNPRSTP.

It belongs to the actin family. As to quaternary structure, interacts with ACTL7A.

It localises to the cytoplasmic vesicle. The protein resides in the secretory vesicle. It is found in the acrosome. The protein localises to the cytoplasm. Its subcellular location is the cytoskeleton. It localises to the perinuclear theca. Its function is as follows. Testis-specic protein that plays an important role in fusion of proacrosomal vesicles and perinuclear theca formation. This Rattus norvegicus (Rat) protein is Actin-like protein 9 (Actl9).